A 116-amino-acid polypeptide reads, in one-letter code: Insulin (116 aa).

The N-terminal stretch at 1–24 (MAALWLQSFSLLVLLVVSWPGSQA) is a signal peptide. Intrachain disulfides connect C32-C102, C44-C115, and C101-C106. Residues 56–93 (DVDQLLGFLPPKSGGAAAAGADNEVAEFAFKDQMEMMV) constitute a propeptide, c peptide.

The protein belongs to the insulin family. Heterodimer of a B chain and an A chain linked by two disulfide bonds.

The protein resides in the secreted. Its function is as follows. Insulin decreases blood glucose concentration. It increases cell permeability to monosaccharides, amino acids and fatty acids. It accelerates glycolysis, the pentose phosphate cycle, and glycogen synthesis in liver. In Lophius americanus (American angler), this protein is Insulin (ins).